The primary structure comprises 341 residues: Ribosomal RNA small subunit methyltransferase C (341 aa).

The protein belongs to the methyltransferase superfamily. RsmC family. In terms of assembly, monomer.

It localises to the cytoplasm. It catalyses the reaction guanosine(1207) in 16S rRNA + S-adenosyl-L-methionine = N(2)-methylguanosine(1207) in 16S rRNA + S-adenosyl-L-homocysteine + H(+). Specifically methylates the guanine in position 1207 of 16S rRNA in the 30S particle. This is Ribosomal RNA small subunit methyltransferase C from Shewanella amazonensis (strain ATCC BAA-1098 / SB2B).